The primary structure comprises 329 residues: Short-chain dehydrogenase/reductase prx4 (329 aa).

The first 21 residues, Met-1 to Cys-21, serve as a signal peptide directing secretion. NADP(+) contacts are provided by Ser-58, Ile-60, and Asn-81. Residue Asn-91 is glycosylated (N-linked (GlcNAc...) asparagine). The NADP(+) site is built by Asp-98, Asn-121, Lys-161, Tyr-194, Lys-198, and Thr-229. The Proton acceptor role is filled by Tyr-194. The Lowers pKa of active site Tyr role is filled by Lys-198. A helical membrane pass occupies residues Gly-238 to Val-258.

It belongs to the short-chain dehydrogenases/reductases (SDR) family.

The protein localises to the membrane. Its pathway is sesquiterpene biosynthesis. Its function is as follows. Short-chain dehydrogenase/reductase; part of the gene cluster that mediates the biosynthesis of PR-toxin, a bicyclic sesquiterpene belonging to the eremophilane class and acting as a mycotoxin. The first step of the pathway is catalyzed by the aristolochene synthase which performs the cyclization of trans,trans-farnesyl diphosphate (FPP) to the bicyclic sesquiterpene aristolochene. Following the formation of aristolochene, the non-oxygenated aristolochene is converted to the trioxygenated intermediate eremofortin B, via 7-epi-neopetasone. This conversion appears to involve three enzymes, a hydroxysterol oxidase-like enzyme, the quinone-oxidase prx3 that forms the quinone-type-structure in the bicyclic nucleus of aristolochene with the C8-oxo group and the C-3 hydroxyl group, and the P450 monooxygenase prx9 that introduces the epoxide at the double bond between carbons 1 and 2. No monoxy or dioxy-intermediates have been reported to be released to the broth, so these three early oxidative reactions may be coupled together. Eremofortin B is further oxidized by another P450 monooxygenase, that introduces a second epoxide between carbons 7 and 11 prior to acetylation to eremofortin A by the acetyltransferase prx11. The second epoxidation may be performed by a second P450 monooxygenase. After the acetylation step, eremofortin A is converted to eremofortin C and then to PR-toxin. First the conversion of eremofortin A to eremofortin C proceeds by oxidation of the side chain of the molecule at C-12 and is catalyzed by the short-chain oxidoreductase prx1. The cytochrome P450 monooxygenase prx8 also plays a role in this step. The primary alcohol formed at C-12 is finally oxidized by the short-chain alcohol dehydrogenase prx4 that forms PR-toxin. The chain is Short-chain dehydrogenase/reductase prx4 from Penicillium rubens (strain ATCC 28089 / DSM 1075 / NRRL 1951 / Wisconsin 54-1255) (Penicillium chrysogenum).